Reading from the N-terminus, the 335-residue chain is Holliday junction branch migration complex subunit RuvB (335 aa).

The tract at residues 4–184 (ADRLVSAEVL…FGIVQRLEFY (181 aa)) is large ATPase domain (RuvB-L). ATP-binding positions include I23, R24, G65, K68, T69, T70, 131-133 (EDY), R174, Y184, and R221. Residue T69 coordinates Mg(2+). The tract at residues 185–255 (NVDDLQSIVS…IATRALDMLS (71 aa)) is small ATPAse domain (RuvB-S). A head domain (RuvB-H) region spans residues 258–335 (AAGFDYLDRK…RHFGMVRNQE (78 aa)). Residues R294, R313, and R318 each coordinate DNA.

Belongs to the RuvB family. In terms of assembly, homohexamer. Forms an RuvA(8)-RuvB(12)-Holliday junction (HJ) complex. HJ DNA is sandwiched between 2 RuvA tetramers; dsDNA enters through RuvA and exits via RuvB. An RuvB hexamer assembles on each DNA strand where it exits the tetramer. Each RuvB hexamer is contacted by two RuvA subunits (via domain III) on 2 adjacent RuvB subunits; this complex drives branch migration. In the full resolvosome a probable DNA-RuvA(4)-RuvB(12)-RuvC(2) complex forms which resolves the HJ.

The protein resides in the cytoplasm. It catalyses the reaction ATP + H2O = ADP + phosphate + H(+). In terms of biological role, the RuvA-RuvB-RuvC complex processes Holliday junction (HJ) DNA during genetic recombination and DNA repair, while the RuvA-RuvB complex plays an important role in the rescue of blocked DNA replication forks via replication fork reversal (RFR). RuvA specifically binds to HJ cruciform DNA, conferring on it an open structure. The RuvB hexamer acts as an ATP-dependent pump, pulling dsDNA into and through the RuvAB complex. RuvB forms 2 homohexamers on either side of HJ DNA bound by 1 or 2 RuvA tetramers; 4 subunits per hexamer contact DNA at a time. Coordinated motions by a converter formed by DNA-disengaged RuvB subunits stimulates ATP hydrolysis and nucleotide exchange. Immobilization of the converter enables RuvB to convert the ATP-contained energy into a lever motion, pulling 2 nucleotides of DNA out of the RuvA tetramer per ATP hydrolyzed, thus driving DNA branch migration. The RuvB motors rotate together with the DNA substrate, which together with the progressing nucleotide cycle form the mechanistic basis for DNA recombination by continuous HJ branch migration. Branch migration allows RuvC to scan DNA until it finds its consensus sequence, where it cleaves and resolves cruciform DNA. The protein is Holliday junction branch migration complex subunit RuvB of Photorhabdus laumondii subsp. laumondii (strain DSM 15139 / CIP 105565 / TT01) (Photorhabdus luminescens subsp. laumondii).